We begin with the raw amino-acid sequence, 1501 residues long: MMYLPYAQLPDPTDKFEIYEEIAQGVNAKVFRAKELDNDRIVALKIQHYDEEHQVSIEEEYRTLRDYCDHPNLPEFYGVYKLSKPNGPDEIWFVMEYCAGGTAVDMVNKLLKLDRRMREEHIAYIIRETCRAAIELNRNHVLHRDIRGDNILLTKNGRVKLCDFGLSRQVDSTLGKRGTCIGSPCWMAPEVVSAMESREPDITVRADVWALGITTIELADGKPPFADMHPTRAMFQIIRNPPPTLMRPTNWSQQINDFISESLEKNAENRPMMVEMVEHPFLTELIENEDEMRSDIAEMLELSRDVKTLYKEPELFVDRGYVKRFDEKPEKMYPEDLAALENPVDENIIESLRHRILMGESYSFIGDILLSLNSNEIKQEFPQEFHAKYRFKSRSENQPHIFSVADIAYQDMLHHKEPQHIVLSGESYSGKSTNARLLIKHLCYLGDGNRGATGRVESSIKAILMLVNAGTPVNNDSTRCVLQYCLTFGKTGKMSGAVFNMYMLEKLRVATTDGTQHNFHIFYYFYDFINQQNQLKEYNLKADRNYRYLRVPPEVPPSKLKYRRDDPEGNVERYREFENILRDIDFNHKQLETVRKVLAAILNIGNIRFRQNGKYAEVENTDIVSRIAELLRVDEKKFMWSLTNFIMVKGGIAERRQYTTEEARDARDAVASTLYSRLVDFIINRINMNMSFPRAVFGDTNAIIIHDMFGFECFNRNGLEQLMINTLNEQMQYHYNQRIFISEMLEMEAEDIDTINLNFYDNKTALDNLLTKPDGLFYIIDDASRSCQDQDLIMDRVSEKHSQFVKKHTATEISVAHYTGRIIYDTRAFTDINRDFVPPEMIETFRSSLDESIMLMFTNQLTKAGNLTMPFEAVQHKDESERKSYALNTLSAGCISQVNNLRTLAANFRFTCLTLLKMLSQNANLGVHFVRCIRADLEYKPRSFHSDVVQQQMKALGVLDTVIARQKGFSSRLPFDEFLRRYQFLAFDFDEPVEMTKDNCRLLFLRLKMEGWALGKTKVFLRYYNDEFLARLYELQVKKVIKVQSMMRALLARKRVKGGKVFKLGKKGPEHHDVAASKIQKAFRGFRDRVRLPPLVNEKSGQLNENTADFIRPFAKKWREKSIFQVLLHYRAARFQDFVNLSQQVHIYNQRMVAGLNKCTRAVPFERINMREVNSSQLGPLPVPIKKMPFRLDQIPFYDTQYMVDPANSISRQAFPNQLLTQHMEDDEPWDSPLQRNPSMTSCALTYNAYKKEQACQTNWDRMGESDNIYNQGYFRDPQQLRRNQMQMNMNAYNNAYNSYNSNYNNQNWGVHRSGSRRNSLKGYAAPPPPPPPMPSSNYYRNNPNQQQRNYQQRSSYPPSDPVRELQNMARNEGDNSEDPPFNFKAMLRKTNYPRGSETNTYDFNNRRGSDSGDQHTFQPPKLRSTGRRYQDDEGYNSSSGNYGVSRKFGQQQRAPTLRQSPASVGRSFEDSNARSFEEAGSYVEEEIAPGITLSGYAVDI.

The 267-residue stretch at 16 to 282 (FEIYEEIAQG…MVEMVEHPFL (267 aa)) folds into the Protein kinase domain. Residues 22–30 (IAQGVNAKV) and K45 contribute to the ATP site. Catalysis depends on D145, which acts as the Proton acceptor. S183 is modified (phosphoserine). One can recognise a Myosin motor domain in the interval 332-1037 (MYPEDLAALE…FLARLYELQV (706 aa)). Residues 913–934 (LTLLKMLSQNANLGVHFVRCIR) are actin-binding. 2 IQ domains span residues 1036–1065 (QVKKVIKVQSMMRALLARKRVKGGKVFKLG) and 1072–1101 (HDVAASKIQKAFRGFRDRVRLPPLVNEKSG). The interval 1043 to 1271 (VQSMMRALLA…RMGESDNIYN (229 aa)) is interaction with rtp. Residues 1066-1501 (KKGPEHHDVA…ITLSGYAVDI (436 aa)) are non alpha-helical, C-terminal domain. Disordered stretches follow at residues 1308–1364 (NWGV…DPVR) and 1390–1473 (KTNY…EDSN). A compositionally biased stretch (pro residues) spans 1326 to 1335 (APPPPPPPMP). A compositionally biased stretch (low complexity) spans 1336–1358 (SSNYYRNNPNQQQRNYQQRSSYP). Residues 1405 to 1414 (NNRRGSDSGD) show a composition bias toward basic and acidic residues. The segment covering 1449-1463 (FGQQQRAPTLRQSPA) has biased composition (polar residues).

It in the C-terminal section; belongs to the TRAFAC class myosin-kinesin ATPase superfamily. Myosin family. The protein in the N-terminal section; belongs to the protein kinase superfamily. Ser/Thr protein kinase family. In terms of assembly, interacts with rtp. As to expression, expressed in the phototransducing compartment of photoreceptor cells, the rhabdomeres (at protein level).

The protein localises to the cytoplasm. It localises to the cytoskeleton. Its subcellular location is the nucleus. The protein resides in the membrane. It is found in the cell projection. The protein localises to the rhabdomere membrane. The enzyme catalyses L-seryl-[protein] + ATP = O-phospho-L-seryl-[protein] + ADP + H(+). The catalysed reaction is L-threonyl-[protein] + ATP = O-phospho-L-threonyl-[protein] + ADP + H(+). Its function is as follows. Required for photoreceptor cell function. The ninaC proteins combines putative serine/threonine-protein kinase and myosin activities. Essential for the expression and stability of the rtp protein in the photoreceptors. The rtp/ninaC complex is required for stability of inad and inac and the normal termination of phototransduction in the retina. This chain is Neither inactivation nor afterpotential protein C (ninaC), found in Drosophila melanogaster (Fruit fly).